The following is a 148-amino-acid chain: SsrA-binding protein (148 aa).

The segment at 124-148 (QFDKRETEKDRDWQREKARLMREKA) is disordered.

It belongs to the SmpB family.

It localises to the cytoplasm. Its function is as follows. Required for rescue of stalled ribosomes mediated by trans-translation. Binds to transfer-messenger RNA (tmRNA), required for stable association of tmRNA with ribosomes. tmRNA and SmpB together mimic tRNA shape, replacing the anticodon stem-loop with SmpB. tmRNA is encoded by the ssrA gene; the 2 termini fold to resemble tRNA(Ala) and it encodes a 'tag peptide', a short internal open reading frame. During trans-translation Ala-aminoacylated tmRNA acts like a tRNA, entering the A-site of stalled ribosomes, displacing the stalled mRNA. The ribosome then switches to translate the ORF on the tmRNA; the nascent peptide is terminated with the 'tag peptide' encoded by the tmRNA and targeted for degradation. The ribosome is freed to recommence translation, which seems to be the essential function of trans-translation. The polypeptide is SsrA-binding protein (Ralstonia pickettii (strain 12J)).